The following is a 339-amino-acid chain: Ribosomal RNA small subunit methyltransferase C (339 aa).

The protein belongs to the methyltransferase superfamily. RsmC family. In terms of assembly, monomer.

The protein resides in the cytoplasm. It carries out the reaction guanosine(1207) in 16S rRNA + S-adenosyl-L-methionine = N(2)-methylguanosine(1207) in 16S rRNA + S-adenosyl-L-homocysteine + H(+). Its function is as follows. Specifically methylates the guanine in position 1207 of 16S rRNA in the 30S particle. The protein is Ribosomal RNA small subunit methyltransferase C of Aliivibrio salmonicida (strain LFI1238) (Vibrio salmonicida (strain LFI1238)).